The primary structure comprises 174 residues: FMN reductase (NADH) RutF (174 aa).

The protein belongs to the non-flavoprotein flavin reductase family. RutF subfamily.

The enzyme catalyses FMNH2 + NAD(+) = FMN + NADH + 2 H(+). Functionally, catalyzes the reduction of FMN to FMNH2 which is used to reduce pyrimidine by RutA via the Rut pathway. This is FMN reductase (NADH) RutF from Stutzerimonas stutzeri (strain A1501) (Pseudomonas stutzeri).